We begin with the raw amino-acid sequence, 113 residues long: MIIIKTKNREYTIDENKEINSISAADTICPYRAYRSYHRKIPIKIDDCKEARKIAGSMTHYVILRQLKEQGCETEKIVDPELKFRADAICDGDALLRLRQTSIGTGMRLISGN.

The protein resides in the virion. The protein is Coat protein TP1 of Thermoproteus tenax virus 1 (strain KRA1) (TTV1).